The primary structure comprises 22 residues: Cytin chain B (22 aa).

It belongs to the protease inhibitor I13 (potato type I serine protease inhibitor) family. In terms of assembly, heterodimer of an A chain and a B chain, linked by a disulfide bond.

Functionally, inhibitor of chymotrypsin. The polypeptide is Cytin chain B (Theromyzon tessulatum (Duck leech)).